A 378-amino-acid polypeptide reads, in one-letter code: Cobalt-precorrin-5B C(1)-methyltransferase (378 aa).

It belongs to the CbiD family.

It catalyses the reaction Co-precorrin-5B + S-adenosyl-L-methionine = Co-precorrin-6A + S-adenosyl-L-homocysteine. The protein operates within cofactor biosynthesis; adenosylcobalamin biosynthesis; cob(II)yrinate a,c-diamide from sirohydrochlorin (anaerobic route): step 6/10. In terms of biological role, catalyzes the methylation of C-1 in cobalt-precorrin-5B to form cobalt-precorrin-6A. This Thermoplasma volcanium (strain ATCC 51530 / DSM 4299 / JCM 9571 / NBRC 15438 / GSS1) protein is Cobalt-precorrin-5B C(1)-methyltransferase.